Here is a 409-residue protein sequence, read N- to C-terminus: Testis-expressed protein 13A (409 aa).

The interval 92 to 408 (WLHGFAKLHK…CGKGIWLQKP (317 aa)) is required for repression of transcription. Residues 347–374 (GGPHRIDHQEHPRDRRYSEPHQQRPPVY) form a disordered region. Positions 348–368 (GPHRIDHQEHPRDRRYSEPHQ) are enriched in basic and acidic residues. The RanBP2-type zinc-finger motif lies at 376–400 (RPGDWDCPWCNAVNFSRRDTCFDCG). Zn(2+) is bound by residues cysteine 382, cysteine 385, cysteine 396, and cysteine 399.

Belongs to the TEX13 family. Interacts with CNOT1; the interaction may inhibit CNOT1 binding to mRNA and subsequently CNOT1-mediated mRNA degradation. In terms of tissue distribution, testis specific.

In terms of biological role, binds to ssRNA containing the consensus sequence 5'-AGGUAA-3'. Plays a role in transcriptional repression. Required for rapid sperm motility and timely degradation of mRNA via its interaction with CNOT1. In Homo sapiens (Human), this protein is Testis-expressed protein 13A.